A 380-amino-acid chain; its full sequence is Epoxyqueuosine reductase (380 aa).

The active-site Proton donor is the D139. The region spanning 181–213 (IPFEPDDPLLDSCGDCTICVDRCPTSALVGNGQ) is the 4Fe-4S ferredoxin-type 1 domain. C193, C196, C199, C203, C219, C245, C248, and C252 together coordinate [4Fe-4S] cluster. Residues 234 to 263 (YRYKIGNRLYGCDTCQQVCPKNRGINTEQD) form the 4Fe-4S ferredoxin-type 2 domain.

The protein belongs to the QueG family. As to quaternary structure, monomer. The cofactor is cob(II)alamin. [4Fe-4S] cluster serves as cofactor.

Its subcellular location is the cytoplasm. The enzyme catalyses epoxyqueuosine(34) in tRNA + AH2 = queuosine(34) in tRNA + A + H2O. The protein operates within tRNA modification; tRNA-queuosine biosynthesis. Functionally, catalyzes the conversion of epoxyqueuosine (oQ) to queuosine (Q), which is a hypermodified base found in the wobble positions of tRNA(Asp), tRNA(Asn), tRNA(His) and tRNA(Tyr). This Staphylococcus aureus (strain NCTC 8325 / PS 47) protein is Epoxyqueuosine reductase.